The primary structure comprises 332 residues: Biotin synthase (332 aa).

Residues 52-282 (FPENEVEFCS…KAELRLCGGR (231 aa)) form the Radical SAM core domain. Residues Cys-70, Cys-74, and Cys-77 each contribute to the [4Fe-4S] cluster site. [2Fe-2S] cluster contacts are provided by Cys-114, Cys-147, Cys-207, and Arg-277.

This sequence belongs to the radical SAM superfamily. Biotin synthase family. As to quaternary structure, homodimer. [4Fe-4S] cluster serves as cofactor. Requires [2Fe-2S] cluster as cofactor.

It catalyses the reaction (4R,5S)-dethiobiotin + (sulfur carrier)-SH + 2 reduced [2Fe-2S]-[ferredoxin] + 2 S-adenosyl-L-methionine = (sulfur carrier)-H + biotin + 2 5'-deoxyadenosine + 2 L-methionine + 2 oxidized [2Fe-2S]-[ferredoxin]. Its pathway is cofactor biosynthesis; biotin biosynthesis; biotin from 7,8-diaminononanoate: step 2/2. In terms of biological role, catalyzes the conversion of dethiobiotin (DTB) to biotin by the insertion of a sulfur atom into dethiobiotin via a radical-based mechanism. The polypeptide is Biotin synthase (Aquifex aeolicus (strain VF5)).